Reading from the N-terminus, the 296-residue chain is 4-hydroxybenzoate octaprenyltransferase (296 aa).

Helical transmembrane passes span 23 to 43 (IGIL…SPGW), 46 to 66 (GLVL…GCVM), 99 to 119 (LALA…PLVV), 141 to 161 (IPQA…FAAI), 163 to 183 (GQLP…AIAY), 211 to 231 (DVFA…WVGV), 237 to 257 (WPYF…YALI), and 265 to 285 (CFKA…GVLA).

This sequence belongs to the UbiA prenyltransferase family. Mg(2+) is required as a cofactor.

The protein localises to the cell inner membrane. The enzyme catalyses all-trans-octaprenyl diphosphate + 4-hydroxybenzoate = 4-hydroxy-3-(all-trans-octaprenyl)benzoate + diphosphate. Its pathway is cofactor biosynthesis; ubiquinone biosynthesis. Its function is as follows. Catalyzes the prenylation of para-hydroxybenzoate (PHB) with an all-trans polyprenyl group. Mediates the second step in the final reaction sequence of ubiquinone-8 (UQ-8) biosynthesis, which is the condensation of the polyisoprenoid side chain with PHB, generating the first membrane-bound Q intermediate 3-octaprenyl-4-hydroxybenzoate. The protein is 4-hydroxybenzoate octaprenyltransferase of Methylobacillus flagellatus (strain ATCC 51484 / DSM 6875 / VKM B-1610 / KT).